The primary structure comprises 496 residues: Probable cytosol aminopeptidase (496 aa).

Mn(2+)-binding residues include K251 and D256. Residue K263 is part of the active site. Mn(2+)-binding residues include D274, D333, and E335. Residue R337 is part of the active site.

The protein belongs to the peptidase M17 family. Mn(2+) serves as cofactor.

It is found in the cytoplasm. The enzyme catalyses Release of an N-terminal amino acid, Xaa-|-Yaa-, in which Xaa is preferably Leu, but may be other amino acids including Pro although not Arg or Lys, and Yaa may be Pro. Amino acid amides and methyl esters are also readily hydrolyzed, but rates on arylamides are exceedingly low.. The catalysed reaction is Release of an N-terminal amino acid, preferentially leucine, but not glutamic or aspartic acids.. Functionally, presumably involved in the processing and regular turnover of intracellular proteins. Catalyzes the removal of unsubstituted N-terminal amino acids from various peptides. The protein is Probable cytosol aminopeptidase of Acidovorax sp. (strain JS42).